A 484-amino-acid polypeptide reads, in one-letter code: Poly(A) RNA polymerase GLD2 (484 aa).

A phosphoserine mark is found at Ser62 and Ser69. The Nuclear localization signal motif lies at 76 to 92; that stretch reads KRISDEKAFPLDGKRQR. Ser95 carries the post-translational modification Phosphoserine. The Mg(2+) site is built by Asp213 and Asp215. The 55-residue stretch at 386-440 folds into the PAP-associated domain; the sequence is SLGDLLLGFLKYYATEFDWNTQMISVREAKAIPRPDDMEWRNKYICVEEPFDGTN.

Belongs to the DNA polymerase type-B-like family. GLD2 subfamily. Interacts with CPEB1, CPEB2, CPSF1 and PABPC1. Interacts with QKI isoform QKI7; promoting recruitment to miRNA miR-122 and miR-122 stabilization. It depends on Mg(2+) as a cofactor. Mn(2+) is required as a cofactor. As to expression, ubiquitous. In brain, it is highly expressed in the cerebral cortex, cerebellum, hippocampus and olfactory bulb.

It is found in the cytoplasm. It localises to the nucleus. It carries out the reaction RNA(n) + ATP = RNA(n)-3'-adenine ribonucleotide + diphosphate. In terms of biological role, cytoplasmic poly(A) RNA polymerase that adds successive AMP monomers to the 3'-end of specific RNAs, forming a poly(A) tail. In contrast to the canonical nuclear poly(A) RNA polymerase, it only adds poly(A) to selected cytoplasmic mRNAs. Does not play a role in replication-dependent histone mRNA degradation. Adds a single nucleotide to the 3' end of specific miRNAs, monoadenylation stabilizes and prolongs the activity of some but not all miRNAs. The chain is Poly(A) RNA polymerase GLD2 (Tent2) from Mus musculus (Mouse).